The sequence spans 875 residues: Phospholipase DDHD1 (875 aa).

Disordered stretches follow at residues 1–30 (MNYPGHGSPRSSERNGGRGGDGAAWELGSD), 101–153 (LRYY…GAAA), and 206–231 (RAQDPDGDHVCGPASPAGPASSSVED). A phosphoserine mark is found at Ser8 and Ser11. Over residues 130-140 (SGGGGAAGGGP) the composition is skewed to gly residues. A compositionally biased stretch (low complexity) spans 217–228 (GPASPAGPASSS). Ser540 is a catalytic residue. The DDHD domain occupies 614-861 (LKFKVENFFC…ALFLLTFMYK (248 aa)). Residue Ser726 is modified to Phosphoserine. The segment at 770 to 804 (RSSASQPSETSRDSIEDEKKPVASPPMTTVATQTL) is disordered. Positions 779 to 790 (TSRDSIEDEKKP) are enriched in basic and acidic residues. Positions 795 to 804 (PMTTVATQTL) are enriched in polar residues.

It belongs to the PA-PLA1 family. In terms of assembly, forms homooligomers and, to a much smaller extent, heterooligomers with DDHD2. Interacts with SEC23A and SEC24C. Expressed in mature testis.

The protein resides in the cytoplasm. It carries out the reaction a 1,2-diacyl-sn-glycero-3-phosphate + H2O = a 2-acyl-sn-glycerol 3-phosphate + a fatty acid + H(+). The catalysed reaction is a 1,2-diacyl-sn-glycero-3-phospho-(1D-myo-inositol) + H2O = a 2-acyl-sn-glycero-3-phospho-D-myo-inositol + a fatty acid + H(+). It catalyses the reaction 1-octadecanoyl-2-(5Z,8Z,11Z,14Z-eicosatetraenoyl)-sn-glycero-3-phospho-(1D-myo-inositol) + H2O = 2-(5Z,8Z,11Z,14Z-eicosatetraenoyl)-sn-glycero-3-phospho-(1D-myo-inositol) + octadecanoate + H(+). The enzyme catalyses a 1-acyl-2-(5Z,8Z,11Z,14Z-eicosatetraenoyl)-sn-glycero-3-phospho-(1D-myo-inositol) + H2O = 2-(5Z,8Z,11Z,14Z-eicosatetraenoyl)-sn-glycero-3-phospho-(1D-myo-inositol) + a fatty acid + H(+). It carries out the reaction 1,2-dihexadecanoyl-sn-glycero-3-phospho-(1D-myo-inositol) + H2O = 2-hexadecanoyl-sn-glycero-3-phospho-(1D-myo-inositol) + hexadecanoate + H(+). The catalysed reaction is 1,2-di-(9Z-octadecenoyl)-sn-glycero-3-phosphate + H2O = 2-(9Z-octadecenoyl)-sn-glycero-3-phosphate + (9Z)-octadecenoate + H(+). It catalyses the reaction a 1-acyl-2-(5Z,8Z,11Z,14Z)-eicosatetraenoyl-sn-glycero-3-phosphate + H2O = 2-(5Z,8Z,11Z,14Z-eicosatetraenoyl)-sn-glycero-3-phosphate + a fatty acid + H(+). The enzyme catalyses 1-hexadecanoyl-2-(9Z-octadecenoyl)-sn-glycero-3-phosphate + H2O = 2-(9Z-octadecenoyl)-sn-glycero-3-phosphate + hexadecanoate + H(+). It carries out the reaction 1-hexadecanoyl-2-(9Z-octadecenoyl)-sn-glycero-3-phospho-L-serine + H2O = 2-(9Z-octadecenoyl)-sn-glycero-3-phospho-L-serine + hexadecanoate + H(+). The catalysed reaction is 1,2-di-(5Z,8Z,11Z,14Z)-eicosatetraenoyl-sn-glycero-3-phosphate + H2O = 2-(5Z,8Z,11Z,14Z-eicosatetraenoyl)-sn-glycero-3-phosphate + (5Z,8Z,11Z,14Z)-eicosatetraenoate + H(+). It catalyses the reaction 1-octadecanoyl-2-(5Z,8Z,11Z,14Z-eicosatetraenoyl)-sn-glycero-3-phosphate + H2O = 2-(5Z,8Z,11Z,14Z-eicosatetraenoyl)-sn-glycero-3-phosphate + octadecanoate + H(+). The enzyme catalyses a 1,2-diacyl-sn-glycero-3-phosphocholine + H2O = a 2-acyl-sn-glycero-3-phosphocholine + a fatty acid + H(+). It carries out the reaction a 1,2-diacyl-sn-glycero-3-phosphoethanolamine + H2O = a 2-acyl-sn-glycero-3-phosphoethanolamine + a fatty acid + H(+). The catalysed reaction is a 1,2-diacyl-sn-glycero-3-phospho-L-serine + H2O = a 2-acyl-sn-glycero-3-phospho-L-serine + a fatty acid + H(+). It catalyses the reaction a 1,2-diacyl-sn-glycero-3-phospho-(1'-sn-glycerol) + H2O = 2-acyl-sn-glycero-3-phospho-(1'-sn-glycerol) + a fatty acid + H(+). The enzyme catalyses 1-hexadecanoyl-2-(9Z-octadecenoyl)-sn-glycero-3-phospho-(1'-sn-glycerol) + H2O = 2-(9Z-octadecenoyl)-sn-glycero-3-phospho-(1'-sn-glycerol) + hexadecanoate + H(+). It carries out the reaction 1-acyl-2-(5Z,8Z,11Z,14Z-eicosatetraenoyl)-sn-glycero-3-phosphocholine + H2O = 2-(5Z,8Z,11Z,14Z)-eicosatetraenoyl-sn-glycero-3-phosphocholine + a fatty acid + H(+). The catalysed reaction is 1-acyl-2-(5Z,8Z,11Z,14Z)-eicosatetraenoyl-sn-glycero-3-phosphoethanolamine + H2O = 2-(5Z,8Z,11Z,14Z)-eicosatetraenoyl-sn-glycero-3-phosphoethanolamine + a fatty acid + H(+). It catalyses the reaction 1-(9Z-octadecenoyl)-2-(7Z,10Z,13Z,16Z,19Z-docosapentaenoyl)-sn-glycero-3-phospho-1D-myo-inositol + H2O = 2-(7Z,10Z,13Z,16Z,19Z-docosapentaenoyl)-sn-glycero-3-phospho-1D-myo-inositol + (9Z)-octadecenoate + H(+). The enzyme catalyses 1-(9Z-octadecenoyl)-2-(5Z,8Z,11Z,14Z-eicosatetraenoyl)-sn-glycero-3-phospho-1D-myo-inositol + H2O = 2-(5Z,8Z,11Z,14Z-eicosatetraenoyl)-sn-glycero-3-phospho-(1D-myo-inositol) + (9Z)-octadecenoate + H(+). It carries out the reaction 1,2-di-(9Z-octadecenoyl)-sn-glycero-3-phospho-1D-myo-inositol + H2O = 2-(9Z-octadecenoyl)-sn-glycero-3-phospho-1D-myo-inositol + (9Z)-octadecenoate + H(+). The catalysed reaction is 1-(9Z-octadecenoyl)-2-(8Z,11Z,14Z-eicosatrienoyl)-sn-glycero-3-phospho-1D-myo-inositol + H2O = 2-(8Z,11Z,14Z-eicosatrienoyl)-sn-glycero-3-phospho-1D-myo-inositol + (9Z)-octadecenoate + H(+). It catalyses the reaction 1,2-di-(9Z-octadecenoyl)-sn-glycero-3-phosphocholine + H2O = (9Z-octadecenoyl)-sn-glycero-3-phosphocholine + (9Z)-octadecenoate + H(+). It participates in phospholipid metabolism; phosphatidylinositol metabolism. Its function is as follows. Phospholipase A1 (PLA1) that hydrolyzes ester bonds at the sn-1 position of glycerophospholipids producing a free fatty acid and a lysophospholipid. Prefers phosphatidate (1,2-diacyl-sn-glycero-3-phosphate, PA) as substrate in vitro, but can efficiently hydrolyze phosphatidylinositol (1,2-diacyl-sn-glycero-3-phospho-(1D-myo-inositol), PI), as well as a range of other glycerophospholipid substrates such as phosphatidylcholine (1,2-diacyl-sn-glycero-3-phosphocholine, PC), phosphatidylethanolamine (1,2-diacyl-sn-glycero-3-phosphoethanolamine, PE), phosphatidylserine (1,2-diacyl-sn-glycero-3-phospho-L-serine, PS) and phosphatidylglycerol (1,2-diacyl-sn-glycero-3-phospho-(1'-sn-glycerol), PG). Involved in the regulation of the endogenous content of polyunsaturated PI and PS lipids in the nervous system. Changes in these lipids extend to downstream metabolic products like PI phosphates PIP and PIP2, which play fundamental roles in cell biology. Regulates mitochondrial morphology. These dynamic changes may be due to PA hydrolysis at the mitochondrial surface. May play a regulatory role in spermatogenesis or sperm function. The chain is Phospholipase DDHD1 (DDHD1) from Bos taurus (Bovine).